The primary structure comprises 631 residues: ATP-dependent DNA helicase 2 subunit 1 (631 aa).

In terms of domain architecture, Ku spans 262-487 (FYLGPNLSMS…VEFFQKIIKK (226 aa)). The disordered stretch occupies residues 550 to 570 (AEPHKKRAAKSTTAGASGPKM).

The protein belongs to the ku70 family. In terms of assembly, heterodimer of a 70 kDa and a 80 kDa subunit.

It is found in the nucleus. The protein resides in the chromosome. It catalyses the reaction ATP + H2O = ADP + phosphate + H(+). Its function is as follows. Single-stranded DNA-dependent ATP-dependent helicase. Involved in non-homologous end joining (NHEJ) DNA double strand break repair. Sequence-specific DNA-binding protein that has a high affinity for a 31 bp sequence in the Yp1 gene. Site-specific DNA binding to 31 bp P element inverted repeats. This is ATP-dependent DNA helicase 2 subunit 1 (Irbp) from Drosophila melanogaster (Fruit fly).